The primary structure comprises 170 residues: Adenine phosphoribosyltransferase (170 aa).

This sequence belongs to the purine/pyrimidine phosphoribosyltransferase family. As to quaternary structure, homodimer.

The protein localises to the cytoplasm. It catalyses the reaction AMP + diphosphate = 5-phospho-alpha-D-ribose 1-diphosphate + adenine. It functions in the pathway purine metabolism; AMP biosynthesis via salvage pathway; AMP from adenine: step 1/1. In terms of biological role, catalyzes a salvage reaction resulting in the formation of AMP, that is energically less costly than de novo synthesis. The polypeptide is Adenine phosphoribosyltransferase (Acaryochloris marina (strain MBIC 11017)).